The following is a 49-amino-acid chain: Large ribosomal subunit protein bL33D (49 aa).

This sequence belongs to the bacterial ribosomal protein bL33 family.

The chain is Large ribosomal subunit protein bL33D (rpmG4) from Enterococcus faecalis (strain ATCC 700802 / V583).